A 153-amino-acid polypeptide reads, in one-letter code: Nucleoside diphosphate kinase (153 aa).

Residue Ala2 is modified to N-acetylalanine. ATP is bound by residues Lys13, Phe61, Arg89, Thr95, Arg106, and Asn116. The Pros-phosphohistidine intermediate role is filled by His119. Ser126 carries the phosphoserine modification.

It belongs to the NDK family. As to quaternary structure, homohexamer. Mg(2+) is required as a cofactor.

Its subcellular location is the cytoplasm. It is found in the cytoskeleton. It catalyses the reaction a 2'-deoxyribonucleoside 5'-diphosphate + ATP = a 2'-deoxyribonucleoside 5'-triphosphate + ADP. The catalysed reaction is a ribonucleoside 5'-diphosphate + ATP = a ribonucleoside 5'-triphosphate + ADP. In terms of biological role, major role in the synthesis of nucleoside triphosphates other than ATP. The ATP gamma phosphate is transferred to the NDP beta phosphate via a ping-pong mechanism, using a phosphorylated active-site intermediate. This is Nucleoside diphosphate kinase (awd) from Drosophila melanogaster (Fruit fly).